Reading from the N-terminus, the 336-residue chain is Cytoskeleton protein RodZ (336 aa).

Residues 1–111 (MNTEATHDQN…LGKRRKKRDG (111 aa)) are Cytoplasmic-facing. Positions 19 to 71 (LRNAREQLGLSQQAVAERLCLKVSTVRDIEEDKAPADLASTFLRGYIRSYARL) constitute an HTH cro/C1-type domain. Positions 30 to 49 (QQAVAERLCLKVSTVRDIEE) form a DNA-binding region, H-T-H motif. Residues 112-132 (WLMTFTWLVLFVVIGLSGAWW) form a helical; Signal-anchor for type II membrane protein membrane-spanning segment. Topologically, residues 133–336 (WQDHKAQQEE…TLNAEQSPAQ (204 aa)) are periplasmic. The segment covering 148–164 (DQSSAELNNNQSQSVPL) has biased composition (polar residues). The tract at residues 148–248 (DQSSAELNNN…TDQAGVTTPA (101 aa)) is disordered. The segment covering 165–201 (DTSTTTDQAMATTPTSPVDTTATNTQTPAATTAPSPT) has biased composition (low complexity). The segment covering 202 to 217 (VDSQQNAVVPPSQANV) has biased composition (polar residues). A compositionally biased stretch (low complexity) spans 219–236 (TAATPAPAATTMPDGAAP).

This sequence belongs to the RodZ family.

The protein localises to the cell inner membrane. Cytoskeletal protein that is involved in cell-shape control through regulation of the length of the long axis. The polypeptide is Cytoskeleton protein RodZ (Escherichia coli (strain SMS-3-5 / SECEC)).